Reading from the N-terminus, the 77-residue chain is Conotoxin LiC42 (77 aa).

Residues 1 to 22 form the signal peptide; it reads MKLTCVLIIAVLFLTASQLITA. The propeptide occupies 23–47; the sequence is DYSRDKQEYGAERLRDAMGKFKGSR. 3 disulfides stabilise this stretch: Cys-49–Cys-62, Cys-56–Cys-67, and Cys-61–Cys-76.

It belongs to the conotoxin O1 superfamily. As to expression, expressed by the venom duct.

It localises to the secreted. In Conus lividus (Livid cone), this protein is Conotoxin LiC42.